We begin with the raw amino-acid sequence, 167 residues long: Transmembrane protein B169L (167 aa).

A run of 2 helical transmembrane segments spans residues 28-48 (NPFIVALIITAVVLVVFFAIC) and 60-80 (TAIYLYICIVALLFLHYYVLN). Asparagine 88 is a glycosylation site (N-linked (GlcNAc...) asparagine; by host).

The protein belongs to the asfivirus B169L family.

It is found in the host membrane. The protein localises to the virion. The sequence is that of Transmembrane protein B169L from African swine fever virus (isolate Tick/Malawi/Lil 20-1/1983) (ASFV).